A 156-amino-acid polypeptide reads, in one-letter code: Small ribosomal subunit protein uS7 (156 aa).

This sequence belongs to the universal ribosomal protein uS7 family. In terms of assembly, part of the 30S ribosomal subunit. Contacts proteins S9 and S11.

Functionally, one of the primary rRNA binding proteins, it binds directly to 16S rRNA where it nucleates assembly of the head domain of the 30S subunit. Is located at the subunit interface close to the decoding center, probably blocks exit of the E-site tRNA. The polypeptide is Small ribosomal subunit protein uS7 (Janthinobacterium sp. (strain Marseille) (Minibacterium massiliensis)).